The chain runs to 79 residues: Defensin-like protein 109 (79 aa).

A signal peptide spans 1–24 (MDFTKKILVVFAFTIMLGISSVHC). Cystine bridges form between Cys-41–Cys-76, Cys-47–Cys-68, Cys-54–Cys-74, and Cys-58–Cys-75.

This sequence belongs to the DEFL family.

It localises to the secreted. The protein is Defensin-like protein 109 of Arabidopsis thaliana (Mouse-ear cress).